The following is a 108-amino-acid chain: Large ribosomal subunit protein bL31B (108 aa).

Positions 86–108 (KPETVVEDVLPKGKKKSPAKKKK) are disordered. The segment covering 97 to 108 (KGKKKSPAKKKK) has biased composition (basic residues).

Belongs to the bacterial ribosomal protein bL31 family. Type B subfamily. In terms of assembly, part of the 50S ribosomal subunit.

The polypeptide is Large ribosomal subunit protein bL31B (Chlamydia trachomatis serovar L2 (strain ATCC VR-902B / DSM 19102 / 434/Bu)).